Consider the following 212-residue polypeptide: Glycerol-3-phosphate acyltransferase (212 aa).

A run of 5 helical transmembrane segments spans residues 10 to 30 (FAALLIVLAYLIGCVPFAVVV), 90 to 110 (GYGLVLIAVFLGHLYPVSLGF), 124 to 144 (FAVSPWLALATVATWLLVAVV), 150 to 170 (LAALVAAFLAPVYYFFGGGTI), and 171 to 191 (WPLNAPTAAALVGVSALLFYR).

This sequence belongs to the PlsY family. In terms of assembly, probably interacts with PlsX.

Its subcellular location is the cell inner membrane. The enzyme catalyses an acyl phosphate + sn-glycerol 3-phosphate = a 1-acyl-sn-glycero-3-phosphate + phosphate. Its pathway is lipid metabolism; phospholipid metabolism. In terms of biological role, catalyzes the transfer of an acyl group from acyl-phosphate (acyl-PO(4)) to glycerol-3-phosphate (G3P) to form lysophosphatidic acid (LPA). This enzyme utilizes acyl-phosphate as fatty acyl donor, but not acyl-CoA or acyl-ACP. The protein is Glycerol-3-phosphate acyltransferase of Bordetella avium (strain 197N).